Consider the following 223-residue polypeptide: UPF0441 protein YgiB (223 aa).

The segment covering 178–195 (TVPKTAMAPKPATTTTVT) has biased composition (low complexity). Residues 178–223 (TVPKTAMAPKPATTTTVTRGGFGESVAKQSTMQRSATGTSSRSMGG) form a disordered region. Over residues 204-223 (AKQSTMQRSATGTSSRSMGG) the composition is skewed to polar residues.

This sequence belongs to the UPF0441 family.

The polypeptide is UPF0441 protein YgiB (Shigella flexneri serotype 5b (strain 8401)).